The sequence spans 251 residues: Squamosa promoter-binding-like protein 4 (251 aa).

Residues 1–15 show a composition bias toward pro residues; the sequence is MDWMPPPKPTSPRSP. A disordered region spans residues 1–64; it reads MDWMPPPKPT…RAEEGGGGGG (64 aa). A compositionally biased stretch (low complexity) spans 24-43; that stretch reads AAVPGSSSGEVSAAAAAAAA. An SBP-type zinc finger spans residues 65-142; the sequence is EVRCQVEGCG…YDHNARRRKP (78 aa). Zn(2+) is bound by residues cysteine 68, cysteine 73, cysteine 90, histidine 93, cysteine 109, cysteine 112, histidine 116, and cysteine 128. The short motif at 125–141 is the Bipartite nuclear localization signal element; it reads KRSCRRRLYDHNARRRK.

As to expression, expressed in stems, leaf sheaths, and young panicles.

It localises to the nucleus. Its function is as follows. Trans-acting factor that binds specifically to the consensus nucleotide sequence 5'-TNCGTACAA-3'. May be involved in panicle development. In Oryza sativa subsp. japonica (Rice), this protein is Squamosa promoter-binding-like protein 4 (SPL4).